The chain runs to 100 residues: Small ribosomal subunit protein uS14c (100 aa).

This sequence belongs to the universal ribosomal protein uS14 family. In terms of assembly, part of the 30S ribosomal subunit.

It is found in the plastid. Its subcellular location is the chloroplast. Binds 16S rRNA, required for the assembly of 30S particles. The polypeptide is Small ribosomal subunit protein uS14c (Ostreococcus tauri).